A 287-amino-acid chain; its full sequence is Toxin zeta (287 aa).

Residue 40-47 (GQPGSGKT) participates in ATP binding. Asparagine 66 is a binding site for substrate. Aspartate 67 acts as the Proton acceptor in catalysis. Substrate contacts are provided by glutamate 100, threonine 118, arginine 120, and threonine 128. Positions 267–287 (KLESLQPPTPPIPKTPKLPGI) are disordered. Positions 273-287 (PPTPPIPKTPKLPGI) are enriched in pro residues.

The protein belongs to the zeta toxin family. As to quaternary structure, in the presence of the epsilon antitoxin forms an inactive PezA(2)PezT(2) heterotetramer. The heterotetramer is still able to bind the UNAG substrate.

The catalysed reaction is UDP-N-acetyl-alpha-D-glucosamine + ATP = UDP-N-acetyl-alpha-D-glucosamine 3'-phosphate + ADP + H(+). Toxic component of a type II toxin-antitoxin (TA) system. Phosphorylates UDP-N-acetyl-D-glucosamine (UNAG) on the 3'-hydroxyl group of the N-acetyl-D-glucosamine moiety, yielding UNAG-3P. UNAG-3P inhibits MurA, the first committed step in cell wall synthesis, which is then blocked. Phosphorylation is inhibited by cognate epsilon antitoxin. Part of a postsegregational killing (PSK) system involved in the killing of plasmid-free cells. The zeta toxin induces programmed cell death. The protein is Toxin zeta of Streptococcus pyogenes.